The sequence spans 92 residues: UPF0250 protein XAC0666 (92 aa).

It belongs to the UPF0250 family.

The polypeptide is UPF0250 protein XAC0666 (Xanthomonas axonopodis pv. citri (strain 306)).